The chain runs to 398 residues: Nicotinate phosphoribosyltransferase (398 aa).

His-221 carries the phosphohistidine; by autocatalysis modification.

This sequence belongs to the NAPRTase family. In terms of processing, transiently phosphorylated on a His residue during the reaction cycle. Phosphorylation strongly increases the affinity for substrates and increases the rate of nicotinate D-ribonucleotide production. Dephosphorylation regenerates the low-affinity form of the enzyme, leading to product release.

The enzyme catalyses nicotinate + 5-phospho-alpha-D-ribose 1-diphosphate + ATP + H2O = nicotinate beta-D-ribonucleotide + ADP + phosphate + diphosphate. The protein operates within cofactor biosynthesis; NAD(+) biosynthesis; nicotinate D-ribonucleotide from nicotinate: step 1/1. Functionally, catalyzes the synthesis of beta-nicotinate D-ribonucleotide from nicotinate and 5-phospho-D-ribose 1-phosphate at the expense of ATP. This chain is Nicotinate phosphoribosyltransferase, found in Buchnera aphidicola subsp. Schizaphis graminum (strain Sg).